The following is a 246-amino-acid chain: Ribonuclease PH (246 aa).

Residues Arg91 and Gly129–Arg131 each bind phosphate.

The protein belongs to the RNase PH family. Homohexameric ring arranged as a trimer of dimers.

It carries out the reaction tRNA(n+1) + phosphate = tRNA(n) + a ribonucleoside 5'-diphosphate. Its function is as follows. Phosphorolytic 3'-5' exoribonuclease that plays an important role in tRNA 3'-end maturation. Removes nucleotide residues following the 3'-CCA terminus of tRNAs; can also add nucleotides to the ends of RNA molecules by using nucleoside diphosphates as substrates, but this may not be physiologically important. Probably plays a role in initiation of 16S rRNA degradation (leading to ribosome degradation) during starvation. The polypeptide is Ribonuclease PH (Paraburkholderia phytofirmans (strain DSM 17436 / LMG 22146 / PsJN) (Burkholderia phytofirmans)).